The following is a 109-amino-acid chain: Cell division protein ZapA (109 aa).

A coiled-coil region spans residues 21-100 (PDQRDALNQA…EQALLERGRI (80 aa)).

The protein belongs to the ZapA family. Type 1 subfamily. As to quaternary structure, homodimer. Interacts with FtsZ.

The protein resides in the cytoplasm. In terms of biological role, activator of cell division through the inhibition of FtsZ GTPase activity, therefore promoting FtsZ assembly into bundles of protofilaments necessary for the formation of the division Z ring. It is recruited early at mid-cell but it is not essential for cell division. This is Cell division protein ZapA from Shigella dysenteriae serotype 1 (strain Sd197).